Reading from the N-terminus, the 380-residue chain is 1-deoxy-D-xylulose 5-phosphate reductoisomerase (380 aa).

NADPH is bound by residues T10, G11, S12, I13, G36, R37, N38, and N120. K121 provides a ligand contact to 1-deoxy-D-xylulose 5-phosphate. E122 contributes to the NADPH binding site. A Mn(2+)-binding site is contributed by D146. Residues S147, E148, S172, and H195 each contribute to the 1-deoxy-D-xylulose 5-phosphate site. E148 provides a ligand contact to Mn(2+). G201 contributes to the NADPH binding site. Residues S208, N213, K214, and E217 each contribute to the 1-deoxy-D-xylulose 5-phosphate site. E217 lines the Mn(2+) pocket.

The protein belongs to the DXR family. Mg(2+) serves as cofactor. Mn(2+) is required as a cofactor.

The catalysed reaction is 2-C-methyl-D-erythritol 4-phosphate + NADP(+) = 1-deoxy-D-xylulose 5-phosphate + NADPH + H(+). It functions in the pathway isoprenoid biosynthesis; isopentenyl diphosphate biosynthesis via DXP pathway; isopentenyl diphosphate from 1-deoxy-D-xylulose 5-phosphate: step 1/6. Its function is as follows. Catalyzes the NADPH-dependent rearrangement and reduction of 1-deoxy-D-xylulose-5-phosphate (DXP) to 2-C-methyl-D-erythritol 4-phosphate (MEP). The sequence is that of 1-deoxy-D-xylulose 5-phosphate reductoisomerase from Listeria welshimeri serovar 6b (strain ATCC 35897 / DSM 20650 / CCUG 15529 / CIP 8149 / NCTC 11857 / SLCC 5334 / V8).